An 820-amino-acid polypeptide reads, in one-letter code: DNA mismatch repair protein MutS (820 aa).

615–622 (GPNMAGKS) contacts ATP.

It belongs to the DNA mismatch repair MutS family.

This protein is involved in the repair of mismatches in DNA. It is possible that it carries out the mismatch recognition step. This protein has a weak ATPase activity. The polypeptide is DNA mismatch repair protein MutS (Anaplasma phagocytophilum (strain HZ)).